A 457-amino-acid chain; its full sequence is Multidrug resistance protein MdtK (457 aa).

The next 12 membrane-spanning stretches (helical) occupy residues 11 to 31, 46 to 66, 93 to 113, 127 to 147, 160 to 180, 188 to 208, 243 to 263, 283 to 301, 316 to 336, 357 to 377, 387 to 407, and 418 to 438; these read LLAL…MGVV, AVAV…GLLL, WLAL…DHVI, AVGF…FQVL, GMVI…IFIY, LGGV…FLMM, LPVA…ALLV, LMFM…RVGF, YTSM…TIVF, LMLL…GSGV, IFFI…YLLG, and PAGF…LMVL.

Belongs to the multi antimicrobial extrusion (MATE) (TC 2.A.66.1) family. MdtK subfamily.

It is found in the cell inner membrane. In terms of biological role, multidrug efflux pump that functions probably as a Na(+)/drug antiporter. This Yersinia pseudotuberculosis serotype O:1b (strain IP 31758) protein is Multidrug resistance protein MdtK.